Reading from the N-terminus, the 116-residue chain is Phosphoribosyl-AMP cyclohydrolase (116 aa).

Asp-81 serves as a coordination point for Mg(2+). Cys-82 is a binding site for Zn(2+). Positions 83 and 85 each coordinate Mg(2+). Cys-98 and Cys-105 together coordinate Zn(2+).

The protein belongs to the PRA-CH family. In terms of assembly, homodimer. The cofactor is Mg(2+). Requires Zn(2+) as cofactor.

Its subcellular location is the cytoplasm. The enzyme catalyses 1-(5-phospho-beta-D-ribosyl)-5'-AMP + H2O = 1-(5-phospho-beta-D-ribosyl)-5-[(5-phospho-beta-D-ribosylamino)methylideneamino]imidazole-4-carboxamide. Its pathway is amino-acid biosynthesis; L-histidine biosynthesis; L-histidine from 5-phospho-alpha-D-ribose 1-diphosphate: step 3/9. Functionally, catalyzes the hydrolysis of the adenine ring of phosphoribosyl-AMP. This Mycolicibacterium vanbaalenii (strain DSM 7251 / JCM 13017 / BCRC 16820 / KCTC 9966 / NRRL B-24157 / PYR-1) (Mycobacterium vanbaalenii) protein is Phosphoribosyl-AMP cyclohydrolase.